A 525-amino-acid polypeptide reads, in one-letter code: Sensory neuron membrane protein 1 (525 aa).

Residues 1–11 (MLLPKPLKYAA) lie on the Cytoplasmic side of the membrane. A helical membrane pass occupies residues 12–32 (IGGGVFVFGILIGWVIFPVIL). At 33-456 (KSQIKKEMAL…LKHQLFIPKR (424 aa)) the chain is on the extracellular side. N67, N105, and N229 each carry an N-linked (GlcNAc...) asparagine glycan. 3 disulfide bridges follow: C268–C333, C297–C352, and C335–C341. N-linked (GlcNAc...) asparagine glycosylation is present at N440. A helical transmembrane segment spans residues 457 to 477 (IVGVIRWWMVSFGLIAVLAGV). Over 478 to 525 (MYHFKDNIMGWAAKGESTTAKVNPEDGSNEQRGVSVIGQDREPPKVTM) the chain is Cytoplasmic. Residues 496–525 (TAKVNPEDGSNEQRGVSVIGQDREPPKVTM) form a disordered region. Positions 516-525 (QDREPPKVTM) are enriched in basic and acidic residues.

It belongs to the CD36 family. In terms of tissue distribution, principal component of the olfactory cilia membrane. Localizes to the somata, dendritic neck and cilia of the olfactory neurons (at protein level). Not detected in the axons of ORNs, the cytoplasm of auxiliary cells or non-sensory structures. Expression is universal among ORNs but differential between neuron and sensillum types.

It localises to the cell membrane. In terms of biological role, plays an olfactory role that is not restricted to pheromone sensitivity. May be involved in the odor detection properties of the olfactory receptor neurons (ORNs) rather than their differentiation and growth. The sequence is that of Sensory neuron membrane protein 1 from Antheraea polyphemus (Polyphemus moth).